Consider the following 279-residue polypeptide: Putative potassium channel regulatory protein (279 aa).

Residues 5 to 74 (ELVTLNVGGM…VRTSQLSLPS (70 aa)) enclose the BTB domain. Positions 256 to 279 (ENSRQENYETETVQVKQAKPNKKR) are disordered.

The protein localises to the endoplasmic reticulum. Inhibits potassium fluxes in cells, possibly by retaining potassium channels in the cytoplasm. The protein is Putative potassium channel regulatory protein (kcnrg) of Xenopus tropicalis (Western clawed frog).